A 522-amino-acid chain; its full sequence is Glutamate--cysteine ligase, chloroplastic (522 aa).

The transit peptide at 1 to 45 (MALMSQAGSSHCIYSEKMKCISGHSSITSNMEMLKMKDICFGNIS) directs the protein to the chloroplast. Cys186 and Cys406 form a disulfide bridge.

The protein belongs to the carboxylate-amine ligase family. Glutamate--cysteine ligase type 2 subfamily. In terms of assembly, homodimer or monomer when oxidized or reduced, respectively. In terms of processing, the Cys-186-Cys-406 disulfide bridge is known to modulate the enzyme activity according to the redox status. The oxidized form constitutes the active enzyme.

Its subcellular location is the plastid. It is found in the chloroplast. The enzyme catalyses L-cysteine + L-glutamate + ATP = gamma-L-glutamyl-L-cysteine + ADP + phosphate + H(+). Its pathway is sulfur metabolism; glutathione biosynthesis; glutathione from L-cysteine and L-glutamate: step 1/2. The sequence is that of Glutamate--cysteine ligase, chloroplastic (GSH1) from Nicotiana tabacum (Common tobacco).